The primary structure comprises 207 residues: Glycerol-3-phosphate acyltransferase (207 aa).

The next 6 membrane-spanning stretches (helical) occupy residues asparagine 8–alanine 28, leucine 64–isoleucine 84, threonine 92–leucine 112, leucine 122–valine 142, serine 154–isoleucine 174, and serine 176–valine 196.

It belongs to the PlsY family. Probably interacts with PlsX.

It localises to the cell inner membrane. It carries out the reaction an acyl phosphate + sn-glycerol 3-phosphate = a 1-acyl-sn-glycero-3-phosphate + phosphate. Its pathway is lipid metabolism; phospholipid metabolism. Its function is as follows. Catalyzes the transfer of an acyl group from acyl-phosphate (acyl-PO(4)) to glycerol-3-phosphate (G3P) to form lysophosphatidic acid (LPA). This enzyme utilizes acyl-phosphate as fatty acyl donor, but not acyl-CoA or acyl-ACP. The sequence is that of Glycerol-3-phosphate acyltransferase from Aliarcobacter butzleri (strain RM4018) (Arcobacter butzleri).